A 491-amino-acid chain; its full sequence is Proline--tRNA ligase (491 aa).

This sequence belongs to the class-II aminoacyl-tRNA synthetase family. ProS type 3 subfamily. As to quaternary structure, homodimer.

It is found in the cytoplasm. It catalyses the reaction tRNA(Pro) + L-proline + ATP = L-prolyl-tRNA(Pro) + AMP + diphosphate. Its function is as follows. Catalyzes the attachment of proline to tRNA(Pro) in a two-step reaction: proline is first activated by ATP to form Pro-AMP and then transferred to the acceptor end of tRNA(Pro). This is Proline--tRNA ligase from Cytophaga hutchinsonii (strain ATCC 33406 / DSM 1761 / CIP 103989 / NBRC 15051 / NCIMB 9469 / D465).